The primary structure comprises 484 residues: Sodium/pantothenate symporter (484 aa).

13 consecutive transmembrane segments (helical) span residues 3–23 (LGII…AIFA), 45–65 (GFVL…FVGG), 74–94 (LGWV…LGAL), 124–144 (VWLS…VQFI), 162–182 (LLLF…RAVV), 190–210 (TVMI…LGGV), 238–258 (FMAS…HTAV), 273–293 (MLIG…AGAL), 307–327 (VIPT…FLAA), 366–386 (VSYF…FAAL), 397–417 (LFAF…GIYW), 424–444 (GALS…QLGI), and 446–466 (LFNF…FLVG).

This sequence belongs to the sodium:solute symporter (SSF) (TC 2.A.21) family.

The protein localises to the cell inner membrane. The catalysed reaction is (R)-pantothenate(in) + Na(+)(in) = (R)-pantothenate(out) + Na(+)(out). Catalyzes the sodium-dependent uptake of extracellular pantothenate. In Haemophilus influenzae (strain ATCC 51907 / DSM 11121 / KW20 / Rd), this protein is Sodium/pantothenate symporter (panF).